Consider the following 308-residue polypeptide: tRNA dimethylallyltransferase (308 aa).

Residue 14–21 coordinates ATP; it reads GPTASGKT. 16–21 serves as a coordination point for substrate; the sequence is TASGKT. Interaction with substrate tRNA regions lie at residues 39-42, 163-167, and 244-249; these read DSAL, QRLSR, and RCVGYR.

It belongs to the IPP transferase family. As to quaternary structure, monomer. It depends on Mg(2+) as a cofactor.

The catalysed reaction is adenosine(37) in tRNA + dimethylallyl diphosphate = N(6)-dimethylallyladenosine(37) in tRNA + diphosphate. Functionally, catalyzes the transfer of a dimethylallyl group onto the adenine at position 37 in tRNAs that read codons beginning with uridine, leading to the formation of N6-(dimethylallyl)adenosine (i(6)A). This is tRNA dimethylallyltransferase from Shewanella baltica (strain OS223).